Here is a 1053-residue protein sequence, read N- to C-terminus: Carbamoyl phosphate synthase large chain (1053 aa).

Residues 1–397 (MPKNTSLKKV…GFKKALRSLD (397 aa)) form a carboxyphosphate synthetic domain region. Positions 127, 167, 173, 174, 206, 208, 213, 239, 240, 241, 282, and 294 each coordinate ATP. Positions 131-323 (KKLMLEIGEP…IARVAAKVAI (193 aa)) constitute an ATP-grasp 1 domain. Positions 282, 294, and 296 each coordinate Mg(2+). Residues Q282, E294, and N296 each coordinate Mn(2+). Residues 398 to 530 (TDIYRHTDLN…YSTWEQECEL (133 aa)) are oligomerization domain. The interval 531 to 919 (TQSDRKKILI…YKASQAADNT (389 aa)) is carbamoyl phosphate synthetic domain. The ATP-grasp 2 domain maps to 661-852 (SVLLDQNNIP…LAKIAAKLML (192 aa)). Residues R697, R736, L738, E743, G768, V769, H770, S771, Q811, and E823 each coordinate ATP. Residues Q811, E823, and N825 each contribute to the Mg(2+) site. Mn(2+)-binding residues include Q811, E823, and N825. Residues 918–1053 (NTIPLKGNVF…TVEPLSHYHS (136 aa)) enclose the MGS-like domain. The allosteric domain stretch occupies residues 920-1053 (IPLKGNVFIS…TVEPLSHYHS (134 aa)).

This sequence belongs to the CarB family. As to quaternary structure, composed of two chains; the small (or glutamine) chain promotes the hydrolysis of glutamine to ammonia, which is used by the large (or ammonia) chain to synthesize carbamoyl phosphate. Tetramer of heterodimers (alpha,beta)4. Requires Mg(2+) as cofactor. Mn(2+) is required as a cofactor.

It carries out the reaction hydrogencarbonate + L-glutamine + 2 ATP + H2O = carbamoyl phosphate + L-glutamate + 2 ADP + phosphate + 2 H(+). The enzyme catalyses hydrogencarbonate + NH4(+) + 2 ATP = carbamoyl phosphate + 2 ADP + phosphate + 2 H(+). It participates in amino-acid biosynthesis; L-arginine biosynthesis; carbamoyl phosphate from bicarbonate: step 1/1. It functions in the pathway pyrimidine metabolism; UMP biosynthesis via de novo pathway; (S)-dihydroorotate from bicarbonate: step 1/3. Large subunit of the glutamine-dependent carbamoyl phosphate synthetase (CPSase). CPSase catalyzes the formation of carbamoyl phosphate from the ammonia moiety of glutamine, carbonate, and phosphate donated by ATP, constituting the first step of 2 biosynthetic pathways, one leading to arginine and/or urea and the other to pyrimidine nucleotides. The large subunit (synthetase) binds the substrates ammonia (free or transferred from glutamine from the small subunit), hydrogencarbonate and ATP and carries out an ATP-coupled ligase reaction, activating hydrogencarbonate by forming carboxy phosphate which reacts with ammonia to form carbamoyl phosphate. The protein is Carbamoyl phosphate synthase large chain of Methanocorpusculum labreanum (strain ATCC 43576 / DSM 4855 / Z).